Consider the following 370-residue polypeptide: (5-formylfuran-3-yl)methyl phosphate transaminase (370 aa).

Lys222 is subject to N6-(pyridoxal phosphate)lysine.

It belongs to the class-I pyridoxal-phosphate-dependent aminotransferase family. Homodimer. It depends on pyridoxal 5'-phosphate as a cofactor.

The protein resides in the cytoplasm. It carries out the reaction 4-(hydroxymethyl)-2-furancarboxaldehyde phosphate + L-alanine = [5-(aminomethyl)-3-furyl]methyl phosphate + pyruvate. It participates in cofactor biosynthesis; methanofuran biosynthesis. Its function is as follows. Catalyzes the transamination reaction between 4-(hydroxymethyl)-2-furancarboxaldehyde phosphate (4-HFC-P) and alanine to produce pyruvate and 5-(aminomethyl)-3-furanmethanol phosphate (F1-P), the precursor for the furan moiety in methanofuran. In Methanocaldococcus jannaschii (strain ATCC 43067 / DSM 2661 / JAL-1 / JCM 10045 / NBRC 100440) (Methanococcus jannaschii), this protein is (5-formylfuran-3-yl)methyl phosphate transaminase.